A 320-amino-acid chain; its full sequence is NAC domain-containing protein 18 (320 aa).

The tract at residues 1–22 (MESTDSSGGPPPPQPNLPPGFR) is disordered. Residues 9–18 (GPPPPQPNLP) show a composition bias toward pro residues. The region spanning 17-177 (LPPGFRFHPT…DWVLCRIYKK (161 aa)) is the NAC domain. Residues 118-183 (VGVKKALVFY…IYKKNNSTAS (66 aa)) mediate DNA binding.

As to expression, restricted primarily to the region of the embryo including the SAM. Expressed in the outer integument, but seems not expressed in the embryo at the torpedo stage.

The protein localises to the nucleus. In terms of biological role, may encode a transcription factor involved in the elaboration of shoot apical meristems (SAM). Together with NAC056/NARS1, regulates embryogenesis by regulating the development and degeneration of ovule integuments, a process required for intertissue communication between the embryo and the maternal integument. The protein is NAC domain-containing protein 18 (NAC018) of Arabidopsis thaliana (Mouse-ear cress).